The chain runs to 281 residues: UDP-N-acetylenolpyruvoylglucosamine reductase (281 aa).

The FAD-binding PCMH-type domain occupies 17–180; it reads VGGKAKKLII…LSATFKFDNG (164 aa). Arg159 is an active-site residue. Ser206 acts as the Proton donor in catalysis. The active site involves Glu276.

Belongs to the MurB family. Requires FAD as cofactor.

The protein localises to the cytoplasm. The catalysed reaction is UDP-N-acetyl-alpha-D-muramate + NADP(+) = UDP-N-acetyl-3-O-(1-carboxyvinyl)-alpha-D-glucosamine + NADPH + H(+). The protein operates within cell wall biogenesis; peptidoglycan biosynthesis. Functionally, cell wall formation. This chain is UDP-N-acetylenolpyruvoylglucosamine reductase, found in Fusobacterium nucleatum subsp. nucleatum (strain ATCC 25586 / DSM 15643 / BCRC 10681 / CIP 101130 / JCM 8532 / KCTC 2640 / LMG 13131 / VPI 4355).